A 1610-amino-acid chain; its full sequence is MKKKSTDLYGRKNPGMQSMSGSFSSLQIALDESSSNFSTIYEPPDLSGLDAEMIVIVKNLQKRDIVTKCRALQDLIQWNDPSQFDNEQFLNALAVLFPRLSIEVERHVRLKIFVFMSVLSSALQKKLAPWLKFYITPWVMGFFDSDRAVSVSAKDSFKNLLSEEKWPHVWLKFGSTIAPIVTDVFLHEDKESLTDLRFFSNEEAESKVTRVKSSCLLTLSFLFKQTADLENLETDKKIDKQTFKSSLYENLSTLFKSDEFWSLVSSPQDGVTVSLSDLLLIILKYDKPFVTQYKEKYFKRVSRMISRLTSLTCVPMLRLLSNMISNFPNEVHQFANDSKRPLSKLFSNLITKRISLPNSGFYTSLLNLFKSIGAMQLVPSIESVDELCDAFLETANQEQRFLSTEVYDCLLNFLSFVYTDSSDPQIKDHVRDRLRTIFTRYFKGEFVLRCSTSDFDHCLQSVFDKNSDFASLWNEVLFGFFNDESMDIETIPFDSLSRNLSLTVQTVLYLKNRNFQTGNEVMSILGPCLSFLMKLSTHKNERIACLSASQLITVCHIFSDTTLIKPVKELFQKYLVNDLPSSILKLGPQSPAFTLLRDILLLLKDYADLSEPWENVANQFTVSFDELENIRVLNSLPSLFADGKLRGKISLVKTLVEYYDTAVFAIMQNPGNDWDMIRACIGSKEILVPEETIKNILFTTLEYFLTNDWVDNHLIILCASLHSLKAHLPTIFDENKSLYSLLPVILFSKPEDDGHVAAHFESIFSLLKEKALEDSGFSLKLCSEVQEWSLNKVLNGSINEKLAADKCVLVFNSFGKLPSNFFTFPASFWDAKISSCIPFFSNKLFIDQDFILGFLDLVASEPINVDMTDVGTQFVHIFHASLYTLYYVETTGCDGDALFNLTFAYLLIRIYLQNGIQSIIDVPIRDAGIFVESFECYFKGEVVKFMRDKDALTVLNELLIDDIDGKMPVLFKRFKNLSSAENTTSFSIFAAQGLTDFLIVVSNLLEMDEKHVDVVLGKLGLSSSKSPIFVSSILEGLKPLEVDSEIIQRIRFKAVNDLTGKLHSANEVSKSLLILNAATTQQITEKPLLPITRCRLFLENITNWCSESGIKSLELLPVCCFLRFMYYFLPTVFSLSGSYWNSIFDYIKYAMKMSVVDAPIVKSFELFALRLYNALSKNYEMNSDIKDCIVESNESMNYLLLKRFLFTHESTLRNSVTARMCNQYLVKLLENCPGKVVRSFQYQEFFPSLCNSNDLQMESVCMKFLREKLSHELKELTVYYMVESDYEPDVSLCPELLSLAIDFPGDPFVMVSKMEKYEHALRVYLLVWDLIFYHFEETTYNIKLSIINQLHAMDLLRPLLNTLVEILNLSYDRPINVDKYPKIDYNLMDYSSATDRIRCLAIHIYYQCLRHLSSSVRSYWSEVKNRAFTSTVESFTGYNVSPLLISASLDDVERSIESEDFQSVGDVNVKVNRNTREISFIYNVDEHKLEMAIKIPSVYPLQNVQVEGIERVGVNERQWRSWILASQSILSSQNGSITDALLVLKKNISMHFEGVEECAICYSVLSVERTLPNKRCGTCRHKFHASCLYKWFKSSNSSRCPLCRSSFTFV.

Over residues 1–10 the composition is skewed to basic and acidic residues; it reads MKKKSTDLYG. The segment at 1–20 is disordered; that stretch reads MKKKSTDLYGRKNPGMQSMS. HEAT repeat units follow at residues 110 to 148, 314 to 351, 372 to 408, 409 to 443, 590 to 626, 627 to 664, 736 to 773, 965 to 1003, 1119 to 1156, 1322 to 1354, 1355 to 1393, and 1435 to 1473; these read LKIFVFMSVLSSALQKKLAPWLKFYITPWVMGFFDSDRA, VPMLRLLSNMISNFPNEVHQFANDSKRPLSKLFSNLIT, IGAMQLVPSIESVDELCDAFLETANQEQRFLSTEVYD, CLLNFLSFVYTDSSDPQIKDHVRDRLRTIFTRYFK, SPAFTLLRDILLLLKDYADLSEPWENVANQFTVSFDE, LENIRVLNSLPSLFADGKLRGKISLVKTLVEYYDTAVF, KSLYSLLPVILFSKPEDDGHVAAHFESIFSLLKEKALE, GKMPVLFKRFKNLSSAENTTSFSIFAAQGLTDFLIVVSN, CCFLRFMYYFLPTVFSLSGSYWNSIFDYIKYAMKMSVV, RVYLLVWDLIFYHFEETTYNIKLSIINQLHAMD, LLRPLLNTLVEILNLSYDRPINVDKYPKIDYNLMDYSSA, and FTGYNVSPLLISASLDDVERSIESEDFQSVGDVNVKVNR. The RING-type; atypical zinc-finger motif lies at 1558 to 1604; sequence CAICYSVLSVERTLPNKRCGTCRHKFHASCLYKWFKSSNSSRCPLCR.

It belongs to the LTN1 family. As to quaternary structure, component of the ribosome quality control complex (RQC), composed of the E3 ubiquitin ligase rkr1/ltn1, rqc1 and mtr1/rqc2, as well as cdc48 and its ubiquitin-binding cofactors. RQC forms a stable complex with 60S ribosomal subunits.

It localises to the nucleus. The protein localises to the cytoplasm. It is found in the cytosol. It carries out the reaction S-ubiquitinyl-[E2 ubiquitin-conjugating enzyme]-L-cysteine + [acceptor protein]-L-lysine = [E2 ubiquitin-conjugating enzyme]-L-cysteine + N(6)-ubiquitinyl-[acceptor protein]-L-lysine.. Its pathway is protein modification; protein ubiquitination. E3 ubiquitin-protein ligase component of the ribosome quality control complex (RQC), a ribosome-associated complex that mediates ubiquitination and extraction of incompletely synthesized nascent chains for proteasomal degradation. Mediates ubiquitination of proteins derived from mRNAs lacking stop codons (non-stop proteins) and other translation arrest products induced by poly-lysine sequences and tandem rare codons. Ubiquitination leads to cdc48 recruitment for extraction and degradation of the incomplete translation product. May indirectly play a role in chromatin function and transcription. This is E3 ubiquitin-protein ligase listerin from Schizosaccharomyces pombe (strain 972 / ATCC 24843) (Fission yeast).